Here is a 119-residue protein sequence, read N- to C-terminus: Immunoglobulin heavy variable 2-5 (119 aa).

The N-terminal stretch at 1–19 (MDTLCSTLLLLTIPSWVLS) is a signal peptide. Residue Gln20 is modified to Pyrrolidone carboxylic acid. The segment at 20-44 (QITLKESGPTLVKPTQTLTLTCTFS) is framework-1. Residues 20-119 (QITLKESGPT…DTATYYCAHR (100 aa)) enclose the Ig-like domain. Cys41 and Cys116 are joined by a disulfide. A complementarity-determining-1 region spans residues 45-54 (GFSLSTSGVG). Residues 55–71 (VGWIRQPPGKALEWLAL) are framework-2. Residues 72 to 78 (IYWDDDK) are complementarity-determining-2. Residues 79–116 (RYSPSLKSRLTITKDTSKNQVVLTMTNMDPVDTATYYC) form a framework-3 region. Residues 117-119 (AHR) are complementarity-determining-3.

In terms of assembly, immunoglobulins are composed of two identical heavy chains and two identical light chains; disulfide-linked.

The protein localises to the secreted. It is found in the cell membrane. V region of the variable domain of immunoglobulin heavy chains that participates in the antigen recognition. Immunoglobulins, also known as antibodies, are membrane-bound or secreted glycoproteins produced by B lymphocytes. In the recognition phase of humoral immunity, the membrane-bound immunoglobulins serve as receptors which, upon binding of a specific antigen, trigger the clonal expansion and differentiation of B lymphocytes into immunoglobulins-secreting plasma cells. Secreted immunoglobulins mediate the effector phase of humoral immunity, which results in the elimination of bound antigens. The antigen binding site is formed by the variable domain of one heavy chain, together with that of its associated light chain. Thus, each immunoglobulin has two antigen binding sites with remarkable affinity for a particular antigen. The variable domains are assembled by a process called V-(D)-J rearrangement and can then be subjected to somatic hypermutations which, after exposure to antigen and selection, allow affinity maturation for a particular antigen. This chain is Immunoglobulin heavy variable 2-5, found in Homo sapiens (Human).